We begin with the raw amino-acid sequence, 278 residues long: Urease accessory protein UreD (278 aa).

This sequence belongs to the UreD family. UreD, UreF and UreG form a complex that acts as a GTP-hydrolysis-dependent molecular chaperone, activating the urease apoprotein by helping to assemble the nickel containing metallocenter of UreC. The UreE protein probably delivers the nickel.

It is found in the cytoplasm. Functionally, required for maturation of urease via the functional incorporation of the urease nickel metallocenter. The chain is Urease accessory protein UreD from Staphylococcus epidermidis (strain ATCC 12228 / FDA PCI 1200).